Reading from the N-terminus, the 107-residue chain is Subtilisin inhibitor-like protein 3 (107 aa).

2 disulfides stabilise this stretch: cysteine 29–cysteine 44 and cysteine 65–cysteine 95.

The protein belongs to the protease inhibitor I16 (SSI) family. As to quaternary structure, homodimer.

It localises to the secreted. Its function is as follows. Inhibitor of subtilisin BPN' and trypsin. This chain is Subtilisin inhibitor-like protein 3, found in Streptomyces coelicolor.